The primary structure comprises 243 residues: 7-cyano-7-deazaguanine synthase (243 aa).

Position 18–28 (18–28 (FSGGQDSATCL)) interacts with ATP. Zn(2+) contacts are provided by cysteine 206, cysteine 221, cysteine 224, and cysteine 227.

Belongs to the QueC family. The cofactor is Zn(2+).

The enzyme catalyses 7-carboxy-7-deazaguanine + NH4(+) + ATP = 7-cyano-7-deazaguanine + ADP + phosphate + H2O + H(+). The protein operates within purine metabolism; 7-cyano-7-deazaguanine biosynthesis. Functionally, catalyzes the ATP-dependent conversion of 7-carboxy-7-deazaguanine (CDG) to 7-cyano-7-deazaguanine (preQ(0)). This is 7-cyano-7-deazaguanine synthase from Methylorubrum extorquens (strain PA1) (Methylobacterium extorquens).